Consider the following 419-residue polypeptide: Gamma-glutamyl phosphate reductase (419 aa).

Belongs to the gamma-glutamyl phosphate reductase family.

It localises to the cytoplasm. The catalysed reaction is L-glutamate 5-semialdehyde + phosphate + NADP(+) = L-glutamyl 5-phosphate + NADPH + H(+). It functions in the pathway amino-acid biosynthesis; L-proline biosynthesis; L-glutamate 5-semialdehyde from L-glutamate: step 2/2. In terms of biological role, catalyzes the NADPH-dependent reduction of L-glutamate 5-phosphate into L-glutamate 5-semialdehyde and phosphate. The product spontaneously undergoes cyclization to form 1-pyrroline-5-carboxylate. This chain is Gamma-glutamyl phosphate reductase, found in Azobacteroides pseudotrichonymphae genomovar. CFP2.